Consider the following 319-residue polypeptide: D-alanine--D-alanine ligase B (319 aa).

The 196-residue stretch at 117 to 312 (KQVWQSLGPA…FQQLVLAILA (196 aa)) folds into the ATP-grasp domain. Position 143 to 198 (143 to 198 (ATELGFPLIVKPAHEGSSIGMAKVNSVDELIAAWKAASTYDSQVLVEQWIQGPEFT)) interacts with ATP. 3 residues coordinate Mg(2+): Asp-266, Glu-279, and Asn-281.

It belongs to the D-alanine--D-alanine ligase family. Requires Mg(2+) as cofactor. Mn(2+) serves as cofactor.

Its subcellular location is the cytoplasm. The catalysed reaction is 2 D-alanine + ATP = D-alanyl-D-alanine + ADP + phosphate + H(+). Its pathway is cell wall biogenesis; peptidoglycan biosynthesis. Its function is as follows. Cell wall formation. The chain is D-alanine--D-alanine ligase B from Pseudomonas syringae pv. tomato (strain ATCC BAA-871 / DC3000).